A 172-amino-acid chain; its full sequence is MRALIFGRFQPFHKGHLSIVKWAFERGYSELVFLVGMASENYTPRNPFTAGERIEMIRLSFLDAGLPLEKAITATIRTLETSIGSVYYVLSYVPRVDTILTRNPVIAKIFLDAGVNVERPPLFNRDEWRGEKIRMWIARGDDRWRSTVTPSTARFIEEIGGVERIRWSLASD.

Belongs to the archaeal NMN adenylyltransferase family.

This is an uncharacterized protein from Aeropyrum pernix (strain ATCC 700893 / DSM 11879 / JCM 9820 / NBRC 100138 / K1).